Reading from the N-terminus, the 449-residue chain is UDP-N-acetylmuramoylalanine--D-glutamate ligase (449 aa).

ATP is bound at residue 116–122 (GSNGKST).

This sequence belongs to the MurCDEF family.

The protein resides in the cytoplasm. It catalyses the reaction UDP-N-acetyl-alpha-D-muramoyl-L-alanine + D-glutamate + ATP = UDP-N-acetyl-alpha-D-muramoyl-L-alanyl-D-glutamate + ADP + phosphate + H(+). Its pathway is cell wall biogenesis; peptidoglycan biosynthesis. In terms of biological role, cell wall formation. Catalyzes the addition of glutamate to the nucleotide precursor UDP-N-acetylmuramoyl-L-alanine (UMA). The sequence is that of UDP-N-acetylmuramoylalanine--D-glutamate ligase from Shewanella violacea (strain JCM 10179 / CIP 106290 / LMG 19151 / DSS12).